Here is a 157-residue protein sequence, read N- to C-terminus: Transcriptional repressor NrdR (157 aa).

The segment at 3–34 (CPKCNSTHSRVVDSRHADEANAIRRRRECENC) is a zinc-finger region. An ATP-cone domain is found at 49–139 (LIVVKKDGTR…VYKEFKDVDQ (91 aa)).

The protein belongs to the NrdR family. Zn(2+) is required as a cofactor.

Negatively regulates transcription of bacterial ribonucleotide reductase nrd genes and operons by binding to NrdR-boxes. This Staphylococcus carnosus (strain TM300) protein is Transcriptional repressor NrdR.